The following is a 45-amino-acid chain: Cytochrome b559 subunit beta (45 aa).

The residue at position 2 (T2) is an N-acetylthreonine. Over 2 to 17 (TSNTPNQEPVSYPIFT) the chain is Cytoplasmic. A helical membrane pass occupies residues 18–42 (VRWVAVHTLAVPTIFFLGAIAAMQF). H24 lines the heme pocket. Topologically, residues 43-45 (IQR) are lumenal.

Heterodimer of an alpha subunit and a beta subunit. PSII is composed of 1 copy each of membrane proteins PsbA, PsbB, PsbC, PsbD, PsbE, PsbF, PsbH, PsbI, PsbJ, PsbK, PsbL, PsbM, PsbT, PsbX, PsbY, PsbZ, Psb30/Ycf12, peripheral proteins PsbO, CyanoQ (PsbQ), PsbU, PsbV and a large number of cofactors. It forms dimeric complexes. Part of a photosystem II (PSII) assembly intermediate complex PSII-I; crystallized from a strain deleted of psbJ, it forms monomeric PSII before addition of the oxygen evolving complex. PSII-I includes 3 assembly factors not found in mature PSII (Psb27, Psb28 and Psb34). Heme b serves as cofactor.

It localises to the cellular thylakoid membrane. Functionally, this b-type cytochrome is tightly associated with the reaction center of photosystem II (PSII). PSII is a light-driven water:plastoquinone oxidoreductase that uses light energy to abstract electrons from H(2)O, generating O(2) and a proton gradient subsequently used for ATP formation. It consists of a core antenna complex that captures photons, and an electron transfer chain that converts photonic excitation into a charge separation. This Thermosynechococcus vestitus (strain NIES-2133 / IAM M-273 / BP-1) protein is Cytochrome b559 subunit beta.